We begin with the raw amino-acid sequence, 501 residues long: Glycerol kinase (501 aa).

Residue threonine 16 coordinates ADP. The ATP site is built by threonine 16, threonine 17, and serine 18. Threonine 16 is a binding site for sn-glycerol 3-phosphate. ADP is bound at residue arginine 20. The sn-glycerol 3-phosphate site is built by arginine 84, glutamate 85, tyrosine 135, and aspartate 242. The glycerol site is built by arginine 84, glutamate 85, tyrosine 135, aspartate 242, and glutamine 243. ADP-binding residues include threonine 264 and glycine 307. Threonine 264, glycine 307, glutamine 311, and glycine 408 together coordinate ATP. Glycine 408 provides a ligand contact to ADP.

Belongs to the FGGY kinase family.

It catalyses the reaction glycerol + ATP = sn-glycerol 3-phosphate + ADP + H(+). Its pathway is polyol metabolism; glycerol degradation via glycerol kinase pathway; sn-glycerol 3-phosphate from glycerol: step 1/1. Functionally, key enzyme in the regulation of glycerol uptake and metabolism. Catalyzes the phosphorylation of glycerol to yield sn-glycerol 3-phosphate. The chain is Glycerol kinase from Saccharolobus islandicus (strain M.16.27) (Sulfolobus islandicus).